The chain runs to 178 residues: Mediator of RNA polymerase II transcription subunit 30 (178 aa).

Positions 1–22 (MSTPPLAPTGMASGPFGGPQAQ) are disordered. Ser-2 is subject to N-acetylserine. The stretch at 134-173 (FASEERREIVEVNKKLKQKNQQLKQIMDQLRNLIWDINAM) forms a coiled coil.

The protein belongs to the Mediator complex subunit 30 family. Component of the Mediator complex, which is composed of MED1, MED4, MED6, MED7, MED8, MED9, MED10, MED11, MED12, MED13, MED13L, MED14, MED15, MED16, MED17, MED18, MED19, MED20, MED21, MED22, MED23, MED24, MED25, MED26, MED27, MED29, MED30, MED31, CCNC, CDK8 and CDC2L6/CDK11. The MED12, MED13, CCNC and CDK8 subunits form a distinct module termed the CDK8 module. Mediator containing the CDK8 module is less active than Mediator lacking this module in supporting transcriptional activation. Individual preparations of the Mediator complex lacking one or more distinct subunits have been variously termed ARC, CRSP, DRIP, PC2, SMCC and TRAP.

It localises to the nucleus. Its function is as follows. Component of the Mediator complex, a coactivator involved in the regulated transcription of nearly all RNA polymerase II-dependent genes. Mediator functions as a bridge to convey information from gene-specific regulatory proteins to the basal RNA polymerase II transcription machinery. Mediator is recruited to promoters by direct interactions with regulatory proteins and serves as a scaffold for the assembly of a functional preinitiation complex with RNA polymerase II and the general transcription factors. The chain is Mediator of RNA polymerase II transcription subunit 30 (Med30) from Mus musculus (Mouse).